We begin with the raw amino-acid sequence, 314 residues long: Putative steroid dehydrogenase 1 (314 aa).

Residue 47 to 76 (ASWAVVTGATDGIGKSYSFELAKRGFNVYI) coordinates NADP(+). Tyr-202 is an active-site residue.

Belongs to the short-chain dehydrogenases/reductases (SDR) family. 17-beta-HSD 3 subfamily.

This is Putative steroid dehydrogenase 1 (stdh-1) from Caenorhabditis elegans.